A 64-amino-acid chain; its full sequence is Large ribosomal subunit protein eL37 (64 aa).

Positions 20, 23, 35, and 38 each coordinate Zn(2+). A C4-type zinc finger spans residues 20-38 (CRRCGRRAFHVRKKVCAAC).

Belongs to the eukaryotic ribosomal protein eL37 family. The cofactor is Zn(2+).

In terms of biological role, binds to the 23S rRNA. In Methanococcus maripaludis (strain DSM 14266 / JCM 13030 / NBRC 101832 / S2 / LL), this protein is Large ribosomal subunit protein eL37.